The chain runs to 203 residues: Glycerol-3-phosphate acyltransferase (203 aa).

5 consecutive transmembrane segments (helical) span residues 13–33 (TLACLVFGYLLGSIPFGLILT), 62–82 (LAAATLLFDALKGTAAAAIAS), 88–108 (AGIAAGFAAFLGHLFPVWLSF), 118–138 (IGVLLGLMPVMVLLFAAIWLA), and 159–179 (IALYAAGNGKVAGLFAVMTAI).

It belongs to the PlsY family. As to quaternary structure, probably interacts with PlsX.

Its subcellular location is the cell inner membrane. The enzyme catalyses an acyl phosphate + sn-glycerol 3-phosphate = a 1-acyl-sn-glycero-3-phosphate + phosphate. Its pathway is lipid metabolism; phospholipid metabolism. Catalyzes the transfer of an acyl group from acyl-phosphate (acyl-PO(4)) to glycerol-3-phosphate (G3P) to form lysophosphatidic acid (LPA). This enzyme utilizes acyl-phosphate as fatty acyl donor, but not acyl-CoA or acyl-ACP. The protein is Glycerol-3-phosphate acyltransferase of Rhizobium meliloti (strain 1021) (Ensifer meliloti).